The primary structure comprises 379 residues: MKEKKEIFTLLHQDAASPARTGVLELPHGKVLTPAFMPVGTAATVKAMTKDDLDEIGFEIILANTYHLFLRPGIEVIKAAGGLHGFSDWKKNFLTDSGGFQVFSLSQLRKITEEGVKFQSHIDGSRQFLSPEIAVELQTGFNSDIQMQLDICSSFGISKTQTLADLKITMNWLDRAFAAWHNTPHEYDGALFPIVQGGFFEDLRLQSLEAILKHEPRGIAIGGLSIGEPKDLYQEYLSFTAKHIPKNKPLYVMGIGTPDYILEAVKNGVDIFDCVLPSRNARNGNLFTHEGAISIKRKEYEFDFNPIDSQCKCKVCRQYTRAYLRHLFRTKEILYSMLATYHNLAFLYSMVQDIREAIQNDSFNDYYKNFLKKYENRLD.

The active-site Proton acceptor is the aspartate 96. Residues 96–100 (DSGGF), aspartate 150, glutamine 196, and glycine 223 contribute to the substrate site. The RNA binding stretch occupies residues 254 to 260 (GIGTPDY). The Nucleophile role is filled by aspartate 273. Zn(2+) contacts are provided by cysteine 311, cysteine 313, cysteine 316, and histidine 342.

This sequence belongs to the queuine tRNA-ribosyltransferase family. In terms of assembly, homodimer. Within each dimer, one monomer is responsible for RNA recognition and catalysis, while the other monomer binds to the replacement base PreQ1. Requires Zn(2+) as cofactor.

The enzyme catalyses 7-aminomethyl-7-carbaguanine + guanosine(34) in tRNA = 7-aminomethyl-7-carbaguanosine(34) in tRNA + guanine. It functions in the pathway tRNA modification; tRNA-queuosine biosynthesis. Its function is as follows. Catalyzes the base-exchange of a guanine (G) residue with the queuine precursor 7-aminomethyl-7-deazaguanine (PreQ1) at position 34 (anticodon wobble position) in tRNAs with GU(N) anticodons (tRNA-Asp, -Asn, -His and -Tyr). Catalysis occurs through a double-displacement mechanism. The nucleophile active site attacks the C1' of nucleotide 34 to detach the guanine base from the RNA, forming a covalent enzyme-RNA intermediate. The proton acceptor active site deprotonates the incoming PreQ1, allowing a nucleophilic attack on the C1' of the ribose to form the product. After dissociation, two additional enzymatic reactions on the tRNA convert PreQ1 to queuine (Q), resulting in the hypermodified nucleoside queuosine (7-(((4,5-cis-dihydroxy-2-cyclopenten-1-yl)amino)methyl)-7-deazaguanosine). The sequence is that of Queuine tRNA-ribosyltransferase from Treponema denticola (strain ATCC 35405 / DSM 14222 / CIP 103919 / JCM 8153 / KCTC 15104).